The sequence spans 662 residues: Interferon-induced GTP-binding protein Mx1 (662 aa).

Met-1 bears the N-acetylmethionine; in Interferon-induced GTP-binding protein Mx1; alternate mark. Residues 67–340 enclose the Dynamin-type G domain; sequence DLALPAIAVI…LITHICKSLP (274 aa). The segment at 77–84 is G1 motif; the sequence is GDQSSGKS. 77–84 provides a ligand contact to GTP; sequence GDQSSGKS. The G2 motif stretch occupies residues 102-104; the sequence is VTR. The tract at residues 178 to 181 is G3 motif; it reads DLPG. GTP is bound by residues 178-182 and 247-250; these read DLPGI and TKPD. Residues 247–250 are G4 motif; that stretch reads TKPD. Residues 279–282 are G5 motif; sequence KCRG. The bundle signaling element (BSE) stretch occupies residues 341–366; that stretch reads LLENQIKETHQRITEELQKYGVDIPE. The interval 366-533 is middle domain; that stretch reads EDENEKMFFL…HFQMEQIVYC (168 aa). The segment at 367–632 is stalk; the sequence is DENEKMFFLI…KDTYSWLLKE (266 aa). The interval 554-557 is critical for lipid-binding; the sequence is KKKK. One can recognise a GED domain in the interval 574–662; sequence MEEIFQHLMA…ARRRLAQFPG (89 aa).

This sequence belongs to the TRAFAC class dynamin-like GTPase superfamily. Dynamin/Fzo/YdjA family. In terms of assembly, homotetramer. Oligomerizes into multimeric filamentous or ring-like structures by virtue of its stalk domain. Oligomerization is critical for GTPase activity, protein stability, and recognition of viral target structures. Interacts with TRPC1, TRPC3, TRPC4, TRPC5, TRPC6 and TRPC7. Interacts with HSPA5. Interacts with DDX39A and DDX39B. Interacts with TUBB/TUBB5. The GTP-bound form interacts (via C-terminus) with THOV P5 protein. The GTP-bound form interacts with LACV protein N. Interacts with CCHFV protein N. Post-translationally, ISGylated.

It is found in the cytoplasm. The protein localises to the endoplasmic reticulum membrane. It localises to the perinuclear region. The protein resides in the nucleus. Its function is as follows. Interferon-induced dynamin-like GTPase with antiviral activity against a wide range of RNA viruses and some DNA viruses. Its target viruses include negative-stranded RNA viruses and HBV through binding and inactivation of their ribonucleocapsid. May also antagonize reoviridae and asfarviridae replication. Inhibits thogoto virus (THOV) replication by preventing the nuclear import of viral nucleocapsids. Inhibits La Crosse virus (LACV) replication by sequestering viral nucleoprotein in perinuclear complexes, preventing genome amplification, budding, and egress. Inhibits influenza A virus (IAV) replication by decreasing or delaying NP synthesis and by blocking endocytic traffic of incoming virus particles. Enhances ER stress-mediated cell death after influenza virus infection. May regulate the calcium channel activity of TRPCs. This chain is Interferon-induced GTP-binding protein Mx1 (MX1), found in Homo sapiens (Human).